An 84-amino-acid chain; its full sequence is Anaphase-promoting complex subunit 11 (84 aa).

Positions 23, 26, 34, 37, 44, 51, 53, 56, 58, 59, 73, and 76 each coordinate Zn(2+). An RING-type zinc finger spans residues C34–R77.

It belongs to the RING-box family. In terms of assembly, the mammalian APC/C is composed at least of 14 distinct subunits ANAPC1, ANAPC2, CDC27/APC3, ANAPC4, ANAPC5, CDC16/APC6, ANAPC7, CDC23/APC8, ANAPC10, ANAPC11, CDC26/APC12, ANAPC13, ANAPC15 and ANAPC16 that assemble into a complex of at least 19 chains with a combined molecular mass of around 1.2 MDa; APC/C interacts with FZR1 and FBXO5. Interacts with the cullin domain of ANAPC2. Interacts with UBE2D2. Auto-ubiquitinated. As to expression, expressed at high levels in skeletal muscle and heart; in moderate levels in brain, kidney, and liver; and at low levels in colon, thymus, spleen, small intestine, placenta, lung and peripheral blood leukocyte.

Its subcellular location is the cytoplasm. The protein resides in the nucleus. It participates in protein modification; protein ubiquitination. Functionally, together with the cullin protein ANAPC2, constitutes the catalytic component of the anaphase promoting complex/cyclosome (APC/C), a cell cycle-regulated E3 ubiquitin ligase that controls progression through mitosis and the G1 phase of the cell cycle. The APC/C complex acts by mediating ubiquitination and subsequent degradation of target proteins: it mainly mediates the formation of 'Lys-11'-linked polyubiquitin chains and, to a lower extent, the formation of 'Lys-48'- and 'Lys-63'-linked polyubiquitin chains. The APC/C complex catalyzes assembly of branched 'Lys-11'-/'Lys-48'-linked branched ubiquitin chains on target proteins. May recruit the E2 ubiquitin-conjugating enzymes to the complex. This chain is Anaphase-promoting complex subunit 11 (ANAPC11), found in Homo sapiens (Human).